Consider the following 173-residue polypeptide: Mesencephalic astrocyte-derived neurotrophic factor homolog (173 aa).

The first 22 residues, M1–A22, serve as a signal peptide directing secretion. Cystine bridges form between C28–C114, C31–C103, C61–C72, and C148–C151.

The protein belongs to the ARMET family.

It localises to the secreted. In terms of biological role, required during the maturation of the embryonic nervous system for maintenance of neuronal and cuticular connectivity. Essential for maintenance of dopaminergic neurons and dopamine levels. The sequence is that of Mesencephalic astrocyte-derived neurotrophic factor homolog from Drosophila grimshawi (Hawaiian fruit fly).